A 408-amino-acid polypeptide reads, in one-letter code: LL-diaminopimelate aminotransferase (408 aa).

Residues Tyr15 and Gly42 each contribute to the substrate site. Residues Tyr72, 108 to 109, Tyr132, Asn187, Tyr218, and 246 to 248 contribute to the pyridoxal 5'-phosphate site; these read SK and SFS. Lys109, Tyr132, and Asn187 together coordinate substrate. Lys249 is subject to N6-(pyridoxal phosphate)lysine. Pyridoxal 5'-phosphate contacts are provided by Arg257 and Asn292. Substrate-binding residues include Asn292 and Arg388.

It belongs to the class-I pyridoxal-phosphate-dependent aminotransferase family. LL-diaminopimelate aminotransferase subfamily. As to quaternary structure, homodimer. Pyridoxal 5'-phosphate serves as cofactor.

The enzyme catalyses (2S,6S)-2,6-diaminopimelate + 2-oxoglutarate = (S)-2,3,4,5-tetrahydrodipicolinate + L-glutamate + H2O + H(+). It functions in the pathway amino-acid biosynthesis; L-lysine biosynthesis via DAP pathway; LL-2,6-diaminopimelate from (S)-tetrahydrodipicolinate (aminotransferase route): step 1/1. Involved in the synthesis of meso-diaminopimelate (m-DAP or DL-DAP), required for both lysine and peptidoglycan biosynthesis. Catalyzes the direct conversion of tetrahydrodipicolinate to LL-diaminopimelate. The sequence is that of LL-diaminopimelate aminotransferase from Leptospira biflexa serovar Patoc (strain Patoc 1 / Ames).